A 347-amino-acid chain; its full sequence is Olfactory receptor 13C3 (347 aa).

Topologically, residues 1-55 (MIVQLICTVCFLAVNTFHVRSSFDFLKADDMGEINQTLVSEFLLLGLSGYPKIEI) are extracellular. N-linked (GlcNAc...) asparagine glycosylation is present at asparagine 35. The helical transmembrane segment at 56-76 (VYFALILVMYLVILIGNGVLI) threads the bilayer. The Cytoplasmic portion of the chain corresponds to 77–84 (IASIFDSH). A helical transmembrane segment spans residues 85 to 105 (FHTPMYFFLGNLSFLDICYTS). At 106-129 (SSVPSTLVSLISKKRNISFSGCAV) the chain is on the extracellular side. A disulfide bond links cysteine 127 and cysteine 219. A helical membrane pass occupies residues 130–150 (QMFFGFAMGSTECLLLGMMAF). At 151–169 (DRYVAICNPLRYPIILSKV) the chain is on the cytoplasmic side. Residues 170–190 (AYVLMASVSWLSGGINSAVQT) traverse the membrane as a helical segment. The Extracellular portion of the chain corresponds to 191 to 227 (LLAMRLPFCGNNIINHFACEILAVLKLACADISLNII). The helical transmembrane segment at 228–247 (TMVISNMAFLVLPLMVIFFS) threads the bilayer. Residues 248–267 (YMFILYTILQMNSATGRRKA) lie on the Cytoplasmic side of the membrane. A helical membrane pass occupies residues 268 to 288 (FSTCSAHLTVVIIFYGTIFFM). Residues 289–307 (YAKPKSQDLIGEEKLQALD) are Extracellular-facing. Residues 308 to 328 (KLISLFYGVVTPMLNPILYSL) traverse the membrane as a helical segment. Over 329–347 (RNKDVKAAVKYLLNKKPIH) the chain is Cytoplasmic.

It belongs to the G-protein coupled receptor 1 family.

Its subcellular location is the cell membrane. In terms of biological role, odorant receptor. This chain is Olfactory receptor 13C3 (OR13C3), found in Homo sapiens (Human).